We begin with the raw amino-acid sequence, 274 residues long: Bis(5'-nucleosyl)-tetraphosphatase, symmetrical (274 aa).

The protein belongs to the Ap4A hydrolase family.

It carries out the reaction P(1),P(4)-bis(5'-adenosyl) tetraphosphate + H2O = 2 ADP + 2 H(+). In terms of biological role, hydrolyzes diadenosine 5',5'''-P1,P4-tetraphosphate to yield ADP. The chain is Bis(5'-nucleosyl)-tetraphosphatase, symmetrical from Shewanella sp. (strain ANA-3).